Reading from the N-terminus, the 299-residue chain is UDP-3-O-acyl-N-acetylglucosamine deacetylase (299 aa).

Zn(2+) is bound by residues histidine 75, histidine 232, and aspartate 236. The active-site Proton donor is histidine 259.

It belongs to the LpxC family. Zn(2+) is required as a cofactor.

The enzyme catalyses a UDP-3-O-[(3R)-3-hydroxyacyl]-N-acetyl-alpha-D-glucosamine + H2O = a UDP-3-O-[(3R)-3-hydroxyacyl]-alpha-D-glucosamine + acetate. It participates in glycolipid biosynthesis; lipid IV(A) biosynthesis; lipid IV(A) from (3R)-3-hydroxytetradecanoyl-[acyl-carrier-protein] and UDP-N-acetyl-alpha-D-glucosamine: step 2/6. Functionally, catalyzes the hydrolysis of UDP-3-O-myristoyl-N-acetylglucosamine to form UDP-3-O-myristoylglucosamine and acetate, the committed step in lipid A biosynthesis. The protein is UDP-3-O-acyl-N-acetylglucosamine deacetylase of Helicobacter hepaticus (strain ATCC 51449 / 3B1).